We begin with the raw amino-acid sequence, 198 residues long: Ribosome maturation factor RimP (198 aa).

It belongs to the RimP family.

It is found in the cytoplasm. Required for maturation of 30S ribosomal subunits. The protein is Ribosome maturation factor RimP of Rhizobium etli (strain CIAT 652).